The primary structure comprises 78 residues: Ferredoxin (78 aa).

4Fe-4S ferredoxin-type domains follow at residues 2–29 (FVITSPCIGEKAADCVETCPVDAIHEGP) and 30–59 (DQYYIDPDLCIDCAACEPVCPVNAIYQEEF). Positions 8 and 16 each coordinate [3Fe-4S] cluster. Positions 20, 39, 42, and 45 each coordinate [4Fe-4S] cluster. [3Fe-4S] cluster is bound at residue C49.

Requires [3Fe-4S] cluster as cofactor. The cofactor is [4Fe-4S] cluster.

Its function is as follows. Ferredoxins are iron-sulfur proteins that transfer electrons in a wide variety of metabolic reactions. This is Ferredoxin from Alicyclobacillus acidocaldarius subsp. acidocaldarius (Bacillus acidocaldarius).